We begin with the raw amino-acid sequence, 93 residues long: Large ribosomal subunit protein eL29 (93 aa).

Residues 1-31 (MAKSKNHSTHHKNRKDHRNGIKKAVVHKKTS) are compositionally biased toward basic residues. A disordered region spans residues 1-33 (MAKSKNHSTHHKNRKDHRNGIKKAVVHKKTSSK).

The protein belongs to the eukaryotic ribosomal protein eL29 family.

This is Large ribosomal subunit protein eL29 (rpl29) from Dictyostelium discoideum (Social amoeba).